The following is a 246-amino-acid chain: 3-deoxy-manno-octulosonate cytidylyltransferase (246 aa).

This sequence belongs to the KdsB family.

The protein resides in the cytoplasm. It carries out the reaction 3-deoxy-alpha-D-manno-oct-2-ulosonate + CTP = CMP-3-deoxy-beta-D-manno-octulosonate + diphosphate. Its pathway is nucleotide-sugar biosynthesis; CMP-3-deoxy-D-manno-octulosonate biosynthesis; CMP-3-deoxy-D-manno-octulosonate from 3-deoxy-D-manno-octulosonate and CTP: step 1/1. The protein operates within bacterial outer membrane biogenesis; lipopolysaccharide biosynthesis. In terms of biological role, activates KDO (a required 8-carbon sugar) for incorporation into bacterial lipopolysaccharide in Gram-negative bacteria. This chain is 3-deoxy-manno-octulosonate cytidylyltransferase, found in Bradyrhizobium sp. (strain BTAi1 / ATCC BAA-1182).